Here is a 332-residue protein sequence, read N- to C-terminus: MKTLGEFIVEKQHEFSHATGELTALLSAIKLGAKIIHRDINKAGLVDILGASGVENVQGETQQKLDLFANEKLKAALKARDIVAGIASEEEDEIVVFEGCEHAKYVVLMDPLDGSSNIDVNVSVGTIFSIYRRVTPVGTPVTMEDFLQPGSQQVAAGYVVYGSSTMLVYTTGCGVHAFTYDPSLGVFCLCQERMRFPQSGNTYSINEGNYIKFPMGVKKYIKYCQEEDKATQRPYTSRYIGSLVADFHRNLLKGGIYLYPSTASHPEGKLRLLYECNPMAFLAEQAGGKASDGKQRILDIKPDSLHQRRPFFVGTEQMVNDVERFIREFPDA.

4 residues coordinate Mg(2+): Glu-89, Asp-110, Leu-112, and Asp-113. Residues 113-116 (DGSS), Asn-206, Tyr-239, 257-259 (YLY), and Lys-269 contribute to the substrate site. Glu-275 serves as a coordination point for Mg(2+).

The protein belongs to the FBPase class 1 family. As to quaternary structure, homotetramer. The cofactor is Mg(2+).

The protein resides in the cytoplasm. The catalysed reaction is beta-D-fructose 1,6-bisphosphate + H2O = beta-D-fructose 6-phosphate + phosphate. It participates in carbohydrate biosynthesis; gluconeogenesis. The sequence is that of Fructose-1,6-bisphosphatase class 1 from Cronobacter sakazakii (strain ATCC BAA-894) (Enterobacter sakazakii).